The chain runs to 1728 residues: Hybrid PKS-NRPS synthetase TAS1 (1728 aa).

The interval 153 to 499 (SPLSKAQMAL…MDPTLLDFKV (347 aa)) is condensation (C) domain. The tract at residues 608 to 1002 (KARAASQPDL…KLHIQGRIGN (395 aa)) is adenylation (A) domain. Residues 1141–1219 (MLRRHLTAEV…KQVDCLMGIV (79 aa)) enclose the Carrier domain. The residue at position 1177 (Ser1177) is an O-(pantetheine 4'-phosphoryl)serine. The tract at residues 1225-1256 (LGSEPTGGSSSRSQSRRSAETSSSSTSAPSSV) is disordered. 2 stretches are compositionally biased toward low complexity: residues 1226–1237 (GSEPTGGSSSRS) and 1244–1255 (ETSSSSTSAPSS). The 453-residue stretch at 1262–1714 (RNLYAIVGIS…SDATWFVIST (453 aa)) folds into the Ketosynthase family 3 (KS3) domain. Catalysis depends on for beta-ketoacyl synthase activity residues Cys1436, His1579, and Asn1633.

The protein in the N-terminal section; belongs to the NRP synthetase family. Pantetheine 4'-phosphate is required as a cofactor.

It carries out the reaction acetoacetyl-CoA + L-isoleucine + ATP = tenuazonic acid + AMP + diphosphate + CoA + 2 H(+). In terms of biological role, hybrid PKS-NRPS synthetase that mediates the biosynthesis of the toxin tenuazonic acid (TeA), an inhibitor of protein biosynthesis on ribosomes by suppressing the release of new protein. TAS1 alone is sufficient for TeA synthesis via the condensation of isoleucine (Ile) with acetoacetyl-CoA by the N-terminal NRPS module and subsequent cyclization conducted by the C-terminal KS domain. The sequence is that of Hybrid PKS-NRPS synthetase TAS1 from Pyricularia oryzae (strain 70-15 / ATCC MYA-4617 / FGSC 8958) (Rice blast fungus).